We begin with the raw amino-acid sequence, 753 residues long: Pumilio homolog 23 (753 aa).

A disordered region spans residues 1 to 84; that stretch reads MVSVGSKSLP…SEFEHQNQFV (84 aa). Basic and acidic residues-rich tracts occupy residues 23 to 38, 47 to 57, and 73 to 84; these read MGERGKSSNNHSERNK, GNRGFDVDSSK, and KHSEFEHQNQFV. Pumilio repeat units follow at residues 123-158, 159-198, 206-244, 284-325, 345-380, 381-418, 526-563, and 564-599; these read ETRGREYEIATDYIISHVLQTLLEGCELDQLCSFIR, NSASVFPAIAMDRSGSHVAESALKSLATHLENPDAYSVIE, KVIVDNPLDMMCNCYGSHVLRRLLCLCKGVSLDSPELYG, GLLS…EIIP, NVAKEILESMKDNSFSHLVEVILEVAPESLYNEMFN, KVFKNSLFELSVDRCANFVIQALISHARDQEQMGIMWE, SMKAEYITETAKDSSGARVIEAFLASDAATKQKRRLII, and KLRGHFGELSLHTSGSFTVEKCFDACNLTLREAIAS. In terms of domain architecture, PUM-HD spans 322-675; sequence EIIPLILRCN…DASEDAAQEI (354 aa). 3 stretches are compositionally biased toward basic and acidic residues: residues 677–688, 699–712, and 719–728; these read VKNTRKEIDHHP, HAKDKDEPFAGEKR, and KTSEATDKPK. Positions 677 to 753 are disordered; the sequence is VKNTRKEIDH…KNRHSNKMRI (77 aa). Over residues 744-753 the composition is skewed to basic residues; sequence KNRHSNKMRI.

The protein localises to the nucleus. It is found in the nucleolus. Functionally, sequence-specific RNA-binding protein that regulates translation and mRNA stability by binding the 3'-UTR of target mRNAs. The protein is Pumilio homolog 23 (APUM23) of Arabidopsis thaliana (Mouse-ear cress).